The primary structure comprises 949 residues: Zinc finger CCHC domain-containing protein 14 (949 aa).

Disordered regions lie at residues 25–44 (SSLNGGGGHGGKGAPGPGGA), 59–92 (EAPVSSVSNSLENALHTSAHSTEESLPKRPLGKH), 200–221 (STSSPPQQLQSPSPGNPSLSKV), 236–262 (AGIPSSQSGAQHHGQHPAGSAAPLPHC), 355–457 (KEKS…DKEK), and 739–779 (PESS…PQPA). Over residues 28 to 43 (NGGGGHGGKGAPGPGG) the composition is skewed to gly residues. Residues 61–78 (PVSSVSNSLENALHTSAH) are compositionally biased toward polar residues. Positions 200-219 (STSSPPQQLQSPSPGNPSLS) are enriched in low complexity. A compositionally biased stretch (basic and acidic residues) spans 395 to 411 (HAAELRVEVEQPHHQLP). A compositionally biased stretch (low complexity) spans 416 to 425 (SSEYSSSSSS). Over residues 431 to 457 (AREESSDSAEENDRRVEIHLESSDKEK) the composition is skewed to basic and acidic residues. The segment at 906–923 (LSCYNCGATGHRAQDCKQ) adopts a CCHC-type zinc-finger fold.

This is Zinc finger CCHC domain-containing protein 14 (ZCCHC14) from Homo sapiens (Human).